The following is a 109-amino-acid chain: MDMDLNNRLTEDETLEQAYDIFLELAADNLDPADVLLFNLQFEERGGAELFDPAEDWQEHVDFDLNPDFFAEVVIGLADSEDGEINDVFARILLCREKDHKLCHIIWRE.

The protein belongs to the putative dsDNA mimic protein family.

Its function is as follows. May act as a double-stranded DNA (dsDNA) mimic. Probably regulates the activity of a dsDNA-binding protein. The chain is Putative double-stranded DNA mimic protein YciU from Shigella boydii serotype 18 (strain CDC 3083-94 / BS512).